We begin with the raw amino-acid sequence, 206 residues long: Small ribosomal subunit protein uS4 (206 aa).

The S4 RNA-binding domain occupies 96–160; that stretch reads CRLDNVVYRM…AQLRIVQALE (65 aa).

The protein belongs to the universal ribosomal protein uS4 family. In terms of assembly, part of the 30S ribosomal subunit. Contacts protein S5. The interaction surface between S4 and S5 is involved in control of translational fidelity.

Functionally, one of the primary rRNA binding proteins, it binds directly to 16S rRNA where it nucleates assembly of the body of the 30S subunit. With S5 and S12 plays an important role in translational accuracy. This Pseudomonas putida (strain GB-1) protein is Small ribosomal subunit protein uS4.